We begin with the raw amino-acid sequence, 683 residues long: Synaptic vesicle glycoprotein 2B (683 aa).

Residues 1-10 (MDDYRYRDNY) show a composition bias toward basic and acidic residues. The disordered stretch occupies residues 1 to 73 (MDDYRYRDNY…TKMAPSRADG (73 aa)). The Cytoplasmic portion of the chain corresponds to 1–110 (MDDYRYRDNY…ECGHGRFQWT (110 aa)). The residue at position 33 (Ser33) is a Phosphoserine. Position 36 is a phosphothreonine (Thr36). A helical transmembrane segment spans residues 111 to 131 (LFFVLGLALMADGVEIFVVSF). The Extracellular portion of the chain corresponds to 132 to 148 (ALPSAEKDMCLSSSKKG). Residues 149–169 (MLGLIVYLGMMAGAFILGGLA) traverse the membrane as a helical segment. Residues 170-182 (DKLGRKKVLSMSL) are Cytoplasmic-facing. A helical transmembrane segment spans residues 183–203 (AINASFASLSSFVQGYGAFLF). At 204–205 (CR) the chain is on the extracellular side. The helical transmembrane segment at 206-226 (LISGIGIGGSLPIVFAYFSEF) threads the bilayer. Topologically, residues 227-237 (LSREKRGEHLS) are cytoplasmic. The helical transmembrane segment at 238–258 (WLGIFWMTGGIYASAMAWSII) threads the bilayer. The Extracellular portion of the chain corresponds to 259–277 (PHYGWGFSMGTNYHFHSWR). The chain crosses the membrane as a helical span at residues 278 to 298 (VFVIVCALPATVSMVALKFMP). Over 299–390 (ESPRFLLEMG…CVMGPYRMNT (92 aa)) the chain is Cytoplasmic. A helical transmembrane segment spans residues 391 to 411 (LILAVVWFTMALSYYGLTVWF). Over 412-535 (PDMIRYFQDE…CHMDFEEDND (124 aa)) the chain is Extracellular. Tyr423 is subject to Phosphotyrosine. N-linked (GlcNAc...) asparagine glycans are attached at residues Asn441, Asn491, and Asn516. The chain crosses the membrane as a helical span at residues 536–556 (FLIYLVSFLGSLSVLPGNIIS). The Cytoplasmic portion of the chain corresponds to 557–565 (ALLMDRIGR). Residues 566–586 (LKMIGGSMLISAVCCFFLFFG) form a helical membrane-spanning segment. The Extracellular portion of the chain corresponds to 587–592 (NSESAM). The helical transmembrane segment at 593–613 (IGWQCLFCGTSIAAWNALDVI) threads the bilayer. The Cytoplasmic segment spans residues 614–626 (TVELYPTNQRATA). Residues 627–649 (FGILNGLCKFGAILGNTIFASFV) form a helical membrane-spanning segment. Residues 650–653 (GITK) are Extracellular-facing. The helical transmembrane segment at 654-672 (VVPILLAAASLVGGGLIAL) threads the bilayer. Residues 673–683 (RLPETREQVLM) lie on the Cytoplasmic side of the membrane.

Belongs to the major facilitator superfamily. Interacts with SYT1 in a calcium-independent manner. Forms a complex with SYT1, syntaxin-1 and SNAP25. In terms of assembly, (Microbial infection) Interacts with C.botulinum neurotoxin type A (BoNT/A, botA). As to quaternary structure, (Microbial infection) Interacts with C.botulinum neurotoxin type D (BoNT/D, botD). No evidence for its interaction with BoNT/D has also been published. Post-translationally, N-glycosylated. The N-terminal cytoplasmic domain is phosphorylated by CK1. As to expression, expressed in ribbon synapses of the retina (at protein level). Expressed in diaphragm motor nerve terminals (at protein level). Expressed in hippocampus neurons (at protein level).

It is found in the cytoplasmic vesicle. The protein localises to the secretory vesicle. It localises to the synaptic vesicle membrane. Its subcellular location is the acrosome. Its function is as follows. Probably plays a role in the control of regulated secretion in neural and endocrine cells. Functionally, (Microbial infection) Receptor for C.botulinum neurotoxin type A (BoNT/A, botA); the toxin probably binds via extracellular loop 4. In terms of biological role, (Microbial infection) Possible receptor for C.botulinum neurotoxin type D (BoNT/D, botD). Not a receptor for C.botulinum neurotoxin type D (BoNT/D, botD). (Microbial infection) Receptor for C.botulinum neurotoxin type E (BoNT/E); the toxin probably binds via extracellular loop 4. It probably requires glycosylation of Asn-516. This chain is Synaptic vesicle glycoprotein 2B (Sv2b), found in Mus musculus (Mouse).